Here is a 420-residue protein sequence, read N- to C-terminus: Gamma-glutamyl phosphate reductase (420 aa).

This sequence belongs to the gamma-glutamyl phosphate reductase family.

The protein localises to the cytoplasm. It carries out the reaction L-glutamate 5-semialdehyde + phosphate + NADP(+) = L-glutamyl 5-phosphate + NADPH + H(+). It participates in amino-acid biosynthesis; L-proline biosynthesis; L-glutamate 5-semialdehyde from L-glutamate: step 2/2. In terms of biological role, catalyzes the NADPH-dependent reduction of L-glutamate 5-phosphate into L-glutamate 5-semialdehyde and phosphate. The product spontaneously undergoes cyclization to form 1-pyrroline-5-carboxylate. This chain is Gamma-glutamyl phosphate reductase, found in Streptococcus sanguinis (strain SK36).